The following is a 64-amino-acid chain: DNA gyrase inhibitor YacG (64 aa).

Zn(2+) is bound by residues C7, C10, C26, and C30. The disordered stretch occupies residues 44–64; the sequence is SIPGEPVVIANDDYNNEESDY.

This sequence belongs to the DNA gyrase inhibitor YacG family. Interacts with GyrB. Zn(2+) is required as a cofactor.

Its function is as follows. Inhibits all the catalytic activities of DNA gyrase by preventing its interaction with DNA. Acts by binding directly to the C-terminal domain of GyrB, which probably disrupts DNA binding by the gyrase. The polypeptide is DNA gyrase inhibitor YacG (Idiomarina loihiensis (strain ATCC BAA-735 / DSM 15497 / L2-TR)).